We begin with the raw amino-acid sequence, 469 residues long: Neuraminidase (469 aa).

Over 1–6 (MNPNQK) the chain is Intravirion. The helical transmembrane segment at 7–27 (LFASSGIAIALGIINLLIGIS) threads the bilayer. Residues 11-33 (SGIAIALGIINLLIGISNMSLNI) form an involved in apical transport and lipid raft association region. 8 N-linked (GlcNAc...) asparagine; by host glycosylation sites follow: asparagine 28, asparagine 32, asparagine 46, asparagine 55, asparagine 56, asparagine 65, asparagine 66, and asparagine 85. At 28–469 (NMSLNISLYS…PDGAQIKYFS (442 aa)) the chain is on the virion surface side. Positions 36–85 (YSKGENHKSDNLTCTNINQNNTTMVNTYINNTTIIDKNTKMENPGYLLLN) are hypervariable stalk region. Residues 88-469 (LCNVEGWVVI…PDGAQIKYFS (382 aa)) form a head of neuraminidase region. 8 disulfides stabilise this stretch: cysteine 89-cysteine 417, cysteine 121-cysteine 126, cysteine 181-cysteine 228, cysteine 230-cysteine 235, cysteine 276-cysteine 289, cysteine 278-cysteine 287, cysteine 316-cysteine 334, and cysteine 421-cysteine 448. Arginine 115 provides a ligand contact to substrate. Residue asparagine 143 is glycosylated (N-linked (GlcNAc...) asparagine; by host). Aspartate 148 serves as the catalytic Proton donor/acceptor. Arginine 149 is a substrate binding site. Asparagine 198 and asparagine 232 each carry an N-linked (GlcNAc...) asparagine; by host glycan. Substrate is bound at residue 274 to 275 (EE). Arginine 290 provides a ligand contact to substrate. Residues aspartate 291, glycine 295, and aspartate 322 each coordinate Ca(2+). Residue asparagine 356 is glycosylated (N-linked (GlcNAc...) asparagine; by host). Arginine 369 contributes to the substrate binding site. N-linked (GlcNAc...) asparagine; by host glycosylation is present at asparagine 399. Residue tyrosine 403 is the Nucleophile of the active site.

Belongs to the glycosyl hydrolase 34 family. Homotetramer. The cofactor is Ca(2+). In terms of processing, N-glycosylated.

It localises to the virion membrane. The protein localises to the host apical cell membrane. It catalyses the reaction Hydrolysis of alpha-(2-&gt;3)-, alpha-(2-&gt;6)-, alpha-(2-&gt;8)- glycosidic linkages of terminal sialic acid residues in oligosaccharides, glycoproteins, glycolipids, colominic acid and synthetic substrates.. Inhibited by the neuraminidase inhibitors zanamivir (Relenza) and oseltamivir (Tamiflu). These drugs interfere with the release of progeny virus from infected cells and are effective against all influenza strains. Resistance to neuraminidase inhibitors is quite rare. Catalyzes the removal of terminal sialic acid residues from viral and cellular glycoconjugates. Cleaves off the terminal sialic acids on the glycosylated HA during virus budding to facilitate virus release. Additionally helps virus spread through the circulation by further removing sialic acids from the cell surface. These cleavages prevent self-aggregation and ensure the efficient spread of the progeny virus from cell to cell. Otherwise, infection would be limited to one round of replication. Described as a receptor-destroying enzyme because it cleaves a terminal sialic acid from the cellular receptors. May facilitate viral invasion of the upper airways by cleaving the sialic acid moieties on the mucin of the airway epithelial cells. Likely to plays a role in the budding process through its association with lipid rafts during intracellular transport. May additionally display a raft-association independent effect on budding. Plays a role in the determination of host range restriction on replication and virulence. Sialidase activity in late endosome/lysosome traffic seems to enhance virus replication. This Influenza A virus (strain A/Equine/Prague/1/1956 H7N7) protein is Neuraminidase.